The sequence spans 438 residues: uncharacterized protein (438 aa).

12 helical membrane passes run 22–42, 59–79, 89–109, 137–157, 174–194, 237–257, 258–278, 292–312, 330–350, 356–376, 380–400, and 418–438; these read VSPIVALTITPIVFALIGGFG, SAALLLFAILFFGILIDAGLF, IVKGDPVKIAIGSAVLAMLIA, MVMATLAMLSLSIVSGMTPWG, FFVPLLPTMLGGIACVIFLAF, LIYLNLFLVISIMVFIVLGTK, HPSVLFLIGFVLALTINYPNV, AITVVLLVFSAGVFAGILSGT, MGGFFPVIVALTSIPFTFVLS, FGMVPIFAEAASAYGIEPVEI, SIMGQPVHLMSPLVASTVLLV, and AVITSLVITLLAIITGAITIL.

The protein belongs to the CitM (TC 2.A.11) transporter family.

Its subcellular location is the cell membrane. In terms of biological role, transports the free citrate anion. This is an uncharacterized protein from Bacillus subtilis (strain 168).